Here is a 287-residue protein sequence, read N- to C-terminus: 4,4'-diapophytoene synthase (287 aa).

(2E,6E)-farnesyl diphosphate is bound by residues 18 to 21, Tyr41, and Arg45; that span reads HSKS. Residues Asp48 and Asp52 each contribute to the Mg(2+) site. A (2E,6E)-farnesyl diphosphate-binding site is contributed by Gln165. Asn168 lines the Mg(2+) pocket. Arg171 contributes to the (2E,6E)-farnesyl diphosphate binding site. Residue Asp172 participates in Mg(2+) binding. Tyr248 provides a ligand contact to (2E,6E)-farnesyl diphosphate.

This sequence belongs to the phytoene/squalene synthase family. CrtM subfamily. Mg(2+) is required as a cofactor.

It carries out the reaction 2 (2E,6E)-farnesyl diphosphate = 15-cis-4,4'-diapophytoene + 2 diphosphate. Its pathway is carotenoid biosynthesis; staphyloxanthin biosynthesis; staphyloxanthin from farnesyl diphosphate: step 1/5. In terms of biological role, involved in the biosynthesis of the yellow-orange carotenoid staphyloxanthin, which plays a role in the virulence via its protective function against oxidative stress. Catalyzes the head-to-head condensation of two molecules of farnesyl diphosphate (FPP) into the colorless C(30) carotenoid 4,4'-diapophytoene (dehydrosqualene). In Staphylococcus aureus, this protein is 4,4'-diapophytoene synthase.